The following is a 435-amino-acid chain: Probable aminotransferase gliI (435 aa).

At K266 the chain carries N6-(pyridoxal phosphate)lysine.

It belongs to the class-I pyridoxal-phosphate-dependent aminotransferase family. Requires pyridoxal 5'-phosphate as cofactor.

It participates in mycotoxin biosynthesis. Probable aminotransferase; part of the gene cluster that mediates the biosynthesis of gliotoxin, a member of the epipolythiodioxopiperazine (ETP) class of toxins characterized by a disulfide bridged cyclic dipeptide. The first step in gliotoxin biosynthesis is the condensation of serine and phenylalanine to form the cyclo-L-phenylalanyl-L-serine diketopiperazine (DKP) by the NRPS gliP. GliP is also able to produce the DKP cyclo-L-tryptophanyl-L-serine, suggesting that the substrate specificity of the first adenylation (A) domain in gliP is sufficiently relaxed to accommodate both L-Phe and L-Trp. The cytochrome P450 monooxygenase gliC has been shown to catalyze the subsequent hydroxylation of the alpha-carbon of L-Phe in cyclo-L-phenylalanyl-L-serine whereas the second cytochrome P450 enzyme, gliF, is presumably involved in the modification of the DKP side chain. The glutathione S-transferase (GST) gliG then forms a bis-glutathionylated biosynthetic intermediate which is responsible for the sulfurization of gliotoxin. This bis-glutathionylated intermediate is subsequently processed by the gamma-glutamyl cyclotransferase gliK to remove both gamma-glutamyl moieties. Subsequent processing via gliI yields a biosynthetic intermediate, which is N-methylated via the N-methyltransferase gliN, before the gliotoxin oxidoreductase gliT-mediated disulfide bridge closure. GliN-mediated amide methylation confers stability to ETP, damping the spontaneous formation of tri- and tetrasulfides. Intracellular dithiol gliotoxin oxidized by gliT is subsequently effluxed by gliA. Gliotoxin contributes to pathogenesis during invasive aspergillosis. In macrophages and neutrophils, gliotoxin showed inhibition of various different cell functions including cytokine production, antigen presentation, phagocytosis, and production of reactive oxygen species. The chain is Probable aminotransferase gliI from Aspergillus fumigatus (strain ATCC MYA-4609 / CBS 101355 / FGSC A1100 / Af293) (Neosartorya fumigata).